Here is a 208-residue protein sequence, read N- to C-terminus: Redox-sensing transcriptional repressor Rex 1 (208 aa).

The segment at residues 15–54 is a DNA-binding region (H-T-H motif); sequence SYYMCLERLLDEGVEVVSSEELARRLDLKASQIRKDLSYF. Residue 89 to 94 coordinates NAD(+); the sequence is GAGNIG.

The protein belongs to the transcriptional regulatory Rex family. As to quaternary structure, homodimer.

It localises to the cytoplasm. In terms of biological role, modulates transcription in response to changes in cellular NADH/NAD(+) redox state. The chain is Redox-sensing transcriptional repressor Rex 1 from Thermotoga maritima (strain ATCC 43589 / DSM 3109 / JCM 10099 / NBRC 100826 / MSB8).